The chain runs to 129 residues: UPF0148 protein AF_2370 (129 aa).

Residues S61–K80 form a disordered region.

It belongs to the UPF0148 family.

This Archaeoglobus fulgidus (strain ATCC 49558 / DSM 4304 / JCM 9628 / NBRC 100126 / VC-16) protein is UPF0148 protein AF_2370.